The following is a 178-amino-acid chain: CDP-archaeol synthase (178 aa).

Helical transmembrane passes span 7-27 (LFVSFWFILPAYTANAMACIF), 56-76 (FFGVFFGIVTAIIQYLVSNLG), 91-111 (VIIGFLLSFGALFGDMFGSFL), 125-145 (VLDQITFIVFALIFVSYYYLV), and 149-169 (ISITLLILSPVVHILSNIIAY).

This sequence belongs to the CDP-archaeol synthase family. Requires Mg(2+) as cofactor.

It is found in the cell membrane. It catalyses the reaction 2,3-bis-O-(geranylgeranyl)-sn-glycerol 1-phosphate + CTP + H(+) = CDP-2,3-bis-O-(geranylgeranyl)-sn-glycerol + diphosphate. The protein operates within membrane lipid metabolism; glycerophospholipid metabolism. Catalyzes the formation of CDP-2,3-bis-(O-geranylgeranyl)-sn-glycerol (CDP-archaeol) from 2,3-bis-(O-geranylgeranyl)-sn-glycerol 1-phosphate (DGGGP) and CTP. This reaction is the third ether-bond-formation step in the biosynthesis of archaeal membrane lipids. The polypeptide is CDP-archaeol synthase (Methanococcus vannielii (strain ATCC 35089 / DSM 1224 / JCM 13029 / OCM 148 / SB)).